We begin with the raw amino-acid sequence, 1377 residues long: Pleckstrin homology-like domain family B member 1 (1377 aa).

Serine 51 carries the post-translational modification Phosphoserine. The 62-residue stretch at 64-125 (TVIGSAARDI…LTQGCMLCLG (62 aa)) folds into the FHA domain. Arginine 131 carries the post-translational modification Asymmetric dimethylarginine. A disordered region spans residues 150 to 187 (RAPGPPYSPVPAESESLVNGNHTPQTATRGPSACASHS). Residues 165-178 (SLVNGNHTPQTATR) show a composition bias toward polar residues. 3 positions are modified to phosphoserine: serine 192, serine 220, and serine 223. Disordered regions lie at residues 211-334 (AAGK…LTDS) and 370-535 (GALS…GSFS). Over residues 252 to 273 (SPAFSPLSSPASSGSCASHSPS) the composition is skewed to low complexity. Residues 288–303 (RSSSYHLALQPPQSRP) are compositionally biased toward polar residues. Positions 309 to 322 (ESPRLSRKGGHERP) are enriched in basic and acidic residues. Phosphoserine occurs at positions 324, 334, 381, 404, 430, 443, 461, 470, 489, and 501. Low complexity predominate over residues 456–473 (ELPPLSPSLSRRALSPLP). A compositionally biased stretch (basic and acidic residues) spans 481–491 (KLNREVAESPR). Arginine 512 is modified (omega-N-methylarginine). Phosphoserine is present on residues serine 518 and serine 520. Residue threonine 522 is modified to Phosphothreonine. Phosphoserine occurs at positions 533, 539, 551, 555, 563, 578, and 583. Low complexity predominate over residues 653–663 (PSRGLAGASGR). Disordered stretches follow at residues 653–707 (PSRG…APST), 936–1019 (TGPA…GSLP), and 1119–1138 (SMET…DNMS). Residues 677-691 (ESMERSDEENLKEEC) are compositionally biased toward basic and acidic residues. Serine 678 carries the phosphoserine modification. The stretch at 683-809 (DEENLKEECS…TETKLFEDLE (127 aa)) forms a coiled coil. Serine 971 and serine 1017 each carry phosphoserine. Low complexity predominate over residues 971 to 992 (SPLPRTRSGPLPSSSGSSSSSS). Positions 1009–1018 (LLTQNGTGSL) are enriched in polar residues. The stretch at 1144-1208 (DMGKIEEMEK…ARRQQLVEKE (65 aa)) forms a coiled coil. In terms of domain architecture, PH spans 1256 to 1370 (SKVCRGYLVK…WMDVIVTGAE (115 aa)).

This is Pleckstrin homology-like domain family B member 1 (PHLDB1) from Homo sapiens (Human).